Here is a 190-residue protein sequence, read N- to C-terminus: Lipid A 1-phosphatase (190 aa).

Transmembrane regions (helical) follow at residues 22–42 (LLAL…PKVP), 60–80 (FIPT…VGLF), 117–137 (GNFN…AFLM), 145–162 (YFWL…RIYL), and 164–184 (MHTI…VSLF).

Belongs to the lipid A LpxE 1-phosphatase family. Does not require divalent cations. is required as a cofactor.

It localises to the cell inner membrane. It participates in bacterial outer membrane biogenesis; LPS lipid A biosynthesis. Functionally, removes the 1-phosphate group from tetra- and probably hexaacylated lipid A species, has no requirement for the Kdo moiety of lipid A. Has no 4'-phosphatase activity. Has no activity on phospholipids (phosphatidylglycerol, phosphatidylethanolamine or cardiolipin). This enzyme has to act before EptA can attach phosphoethanolamine to the 1-position of lipid A. Absence of the 1-phosphate group renders the bacteria partially resistant to host-derived cationic antimicrobial peptides (CAMP), allowing it to camouflage itself from the host innate immune response, and plays a role in the long-term colonization of the host's stomach. The polypeptide is Lipid A 1-phosphatase (Helicobacter pylori (strain ATCC 700392 / 26695) (Campylobacter pylori)).